A 382-amino-acid polypeptide reads, in one-letter code: Opsin Rh3 (382 aa).

Residues 1 to 56 (MEYHNVSSVLGNVSSVLRPDARLSAESRLLGWNVPPDELRHIPEHWLIYPEPPESM) are Extracellular-facing. Asn12 carries an N-linked (GlcNAc...) asparagine glycan. The helical transmembrane segment at 57-81 (NYLLGTLYIFFTVISMIGNGLVMWV) threads the bilayer. Over 82–93 (FSAAKSLRTPSN) the chain is Cytoplasmic. A helical membrane pass occupies residues 94–118 (ILVINLAFCDFMMMIKTPIFIYNSF). The Extracellular portion of the chain corresponds to 119–132 (HQGYALGHLGCQIF). Cys129 and Cys206 are disulfide-bonded. A helical transmembrane segment spans residues 133–152 (GVIGSYTGIAAGATNAFIAY). The Cytoplasmic portion of the chain corresponds to 153–170 (DRYNVITRPMEGKMTHGK). Residues 171-195 (AIAMIIFIYLYATPWVVACYTESWG) form a helical membrane-spanning segment. The Extracellular segment spans residues 196–219 (RFVPEGYLTSCTFDYLTDNFDTRL). A helical transmembrane segment spans residues 220 to 247 (FVACIFFFSFVCPTTMITYYYSQIVGHV). At 248 to 283 (FSHEKALRDQAKKMNVDSLRSNVDKSKEAAEIRIAK) the chain is on the cytoplasmic side. Residues 284–307 (AAITICFLFFASWTPYGVMSLIGA) form a helical membrane-spanning segment. The Extracellular segment spans residues 308 to 315 (FGDKTLLT). The helical transmembrane segment at 316-340 (PGATMIPACTCKMVACIDPFVYAIS) threads the bilayer. Position 327 is an N6-(retinylidene)lysine (Lys327). The Cytoplasmic portion of the chain corresponds to 341-382 (HPRYRMELQKRCPWLAISEKAPESAAAISTSTTQEQQQTTAA).

This sequence belongs to the G-protein coupled receptor 1 family. Opsin subfamily. Post-translationally, phosphorylated on some or all of the serine and threonine residues present in the C-terminal region.

The protein localises to the membrane. Visual pigments are the light-absorbing molecules that mediate vision. They consist of an apoprotein, opsin, covalently linked to cis-retinal. The chain is Opsin Rh3 (Rh3) from Drosophila pseudoobscura pseudoobscura (Fruit fly).